Here is a 114-residue protein sequence, read N- to C-terminus: MSLLLLLLACGLTCLGQVAQKFAVESWRGQPSSALQKLRSGWLWLALFSLGLGLLVWLLVLQRMEVGVAYPMLSLNFVFITLIAHFVFREHIDRRHWFGVALVIGGVLLLSRHA.

The next 2 helical transmembrane spans lie at 41–61 and 68–88; these read GWLWLALFSLGLGLLVWLLVL and VAYPMLSLNFVFITLIAHFVF. The EamA domain maps to 43-112; that stretch reads LWLALFSLGL…VIGGVLLLSR (70 aa).

Belongs to the ArnE family. Heterodimer of ArnE and ArnF.

The protein localises to the cell inner membrane. The protein operates within bacterial outer membrane biogenesis; lipopolysaccharide biosynthesis. Translocates 4-amino-4-deoxy-L-arabinose-phosphoundecaprenol (alpha-L-Ara4N-phosphoundecaprenol) from the cytoplasmic to the periplasmic side of the inner membrane. The protein is Probable 4-amino-4-deoxy-L-arabinose-phosphoundecaprenol flippase subunit ArnE of Pseudomonas fluorescens (strain ATCC BAA-477 / NRRL B-23932 / Pf-5).